A 198-amino-acid polypeptide reads, in one-letter code: MKALLIDYGSGNLRSAAKALEAAGFSVAVAQDPKAHEEADLLVLPGQGHFGQVMRAFQESGFVERVRRHLERGLPFLGICVGMQVLYEGSEEAPGVRGLGLVPGEVRRFRAGRVPQMGWNALEFGGAFAPLTGRHFYFANSYYGPLTPYSLGKGEYEGTPFTALLAKENLLAPQFHPEKSGKAGLAFLALARRYFEVL.

The Glutamine amidotransferase type-1 domain maps to Lys2 to Leu198. Cys80 functions as the Nucleophile in the catalytic mechanism. Catalysis depends on residues His176 and Glu178.

As to quaternary structure, heterodimer of HisH and HisF.

It is found in the cytoplasm. The catalysed reaction is 5-[(5-phospho-1-deoxy-D-ribulos-1-ylimino)methylamino]-1-(5-phospho-beta-D-ribosyl)imidazole-4-carboxamide + L-glutamine = D-erythro-1-(imidazol-4-yl)glycerol 3-phosphate + 5-amino-1-(5-phospho-beta-D-ribosyl)imidazole-4-carboxamide + L-glutamate + H(+). It carries out the reaction L-glutamine + H2O = L-glutamate + NH4(+). It functions in the pathway amino-acid biosynthesis; L-histidine biosynthesis; L-histidine from 5-phospho-alpha-D-ribose 1-diphosphate: step 5/9. Functionally, IGPS catalyzes the conversion of PRFAR and glutamine to IGP, AICAR and glutamate. The HisH subunit catalyzes the hydrolysis of glutamine to glutamate and ammonia as part of the synthesis of IGP and AICAR. The resulting ammonia molecule is channeled to the active site of HisF. The protein is Imidazole glycerol phosphate synthase subunit HisH of Thermus thermophilus (strain ATCC BAA-163 / DSM 7039 / HB27).